Here is a 290-residue protein sequence, read N- to C-terminus: Glycine--tRNA ligase alpha subunit (290 aa).

Belongs to the class-II aminoacyl-tRNA synthetase family. In terms of assembly, tetramer of two alpha and two beta subunits.

It localises to the cytoplasm. The enzyme catalyses tRNA(Gly) + glycine + ATP = glycyl-tRNA(Gly) + AMP + diphosphate. This Syntrophotalea carbinolica (strain DSM 2380 / NBRC 103641 / GraBd1) (Pelobacter carbinolicus) protein is Glycine--tRNA ligase alpha subunit.